The following is a 101-amino-acid chain: Urease subunit gamma (101 aa).

The protein belongs to the urease gamma subunit family. In terms of assembly, heterotrimer of UreA (gamma), UreB (beta) and UreC (alpha) subunits. Three heterotrimers associate to form the active enzyme.

It localises to the cytoplasm. The enzyme catalyses urea + 2 H2O + H(+) = hydrogencarbonate + 2 NH4(+). The protein operates within nitrogen metabolism; urea degradation; CO(2) and NH(3) from urea (urease route): step 1/1. The sequence is that of Urease subunit gamma from Corynebacterium kroppenstedtii (strain DSM 44385 / JCM 11950 / CIP 105744 / CCUG 35717).